Consider the following 280-residue polypeptide: 2-dehydro-3-deoxyphosphooctonate aldolase (280 aa).

Belongs to the KdsA family.

It is found in the cytoplasm. The catalysed reaction is D-arabinose 5-phosphate + phosphoenolpyruvate + H2O = 3-deoxy-alpha-D-manno-2-octulosonate-8-phosphate + phosphate. Its pathway is carbohydrate biosynthesis; 3-deoxy-D-manno-octulosonate biosynthesis; 3-deoxy-D-manno-octulosonate from D-ribulose 5-phosphate: step 2/3. It participates in bacterial outer membrane biogenesis; lipopolysaccharide biosynthesis. In Coxiella burnetii (strain Dugway 5J108-111), this protein is 2-dehydro-3-deoxyphosphooctonate aldolase.